Consider the following 257-residue polypeptide: Uroporphyrinogen-III C-methyltransferase (257 aa).

Residues P11, 87-89 (GGD), 117-118 (TS), and M170 contribute to the S-adenosyl-L-homocysteine site.

Belongs to the precorrin methyltransferase family.

It carries out the reaction uroporphyrinogen III + 2 S-adenosyl-L-methionine = precorrin-2 + 2 S-adenosyl-L-homocysteine + H(+). The protein operates within cofactor biosynthesis; adenosylcobalamin biosynthesis; precorrin-2 from uroporphyrinogen III: step 1/1. It participates in porphyrin-containing compound metabolism; siroheme biosynthesis; precorrin-2 from uroporphyrinogen III: step 1/1. Its function is as follows. Catalyzes the two successive C-2 and C-7 methylation reactions involved in the conversion of uroporphyrinogen III to precorrin-2 via the intermediate formation of precorrin-1. It is a step in the biosynthesis of both cobalamin (vitamin B12) and siroheme. This chain is Uroporphyrinogen-III C-methyltransferase (sumT), found in Bacillus subtilis (strain 168).